A 388-amino-acid chain; its full sequence is GTPase Obg (388 aa).

In terms of domain architecture, Obg spans 1-159; that stretch reads MKFVDEANIR…RSIKLELLLL (159 aa). An OBG-type G domain is found at 160–333; the sequence is ADVGLLGMPN…LSIKMLDYIR (174 aa). GTP contacts are provided by residues 166–173, 191–195, 213–216, 283–286, and 314–316; these read GMPNAGKS, FTTLV, DIPG, NKTD, and SAY. Residues S173 and T193 each contribute to the Mg(2+) site.

This sequence belongs to the TRAFAC class OBG-HflX-like GTPase superfamily. OBG GTPase family. Monomer. Mg(2+) is required as a cofactor.

The protein resides in the cytoplasm. In terms of biological role, an essential GTPase which binds GTP, GDP and possibly (p)ppGpp with moderate affinity, with high nucleotide exchange rates and a fairly low GTP hydrolysis rate. Plays a role in control of the cell cycle, stress response, ribosome biogenesis and in those bacteria that undergo differentiation, in morphogenesis control. This chain is GTPase Obg, found in Shewanella frigidimarina (strain NCIMB 400).